The primary structure comprises 365 residues: MISLIIGIMVSLVVTIVGTPLLIKLVHKLNYGQYIRQDGPKSHLVKRGTPTLGGVVINLAVVLGWCSSALYRFLTRGEVPSWSAVLVLFAMLSMGFLGFIDDFAKVRKKQSEGLTVKGKFIGQFILATIYAVLALILPTKSGFPSAQAGMSFIEKPFFSFEFAGRVVAIVLFVIWVNFLMTAWTNAINLTDGLDGLAAGSSMIAFIGYAIIAFWEFYHLKGSDHPGFTYAVSDPLDLTIIAACAAVACFGFLWYNSNPASIFMGDTGSLALGGLFAAMSIATHTEFLAIILGGLFVIETMSDIIQVGYFKMTHKRVFKMAPIHHHFELKGWPEVKVVVRFWMIEMLFVLIALVLFYGDWVARSGL.

Helical transmembrane passes span 2 to 22 (ISLI…TPLL), 51 to 71 (TLGG…SALY), 80 to 100 (PSWS…LGFI), 118 to 138 (GKFI…LILP), 167 to 187 (VAIV…TNAI), 196 to 216 (LAAG…FWEF), 234 to 254 (PLDL…FLWY), 256 to 276 (SNPA…GLFA), 277 to 297 (AMSI…LFVI), and 340 to 360 (FWMI…GDWV).

This sequence belongs to the glycosyltransferase 4 family. MraY subfamily. Requires Mg(2+) as cofactor.

The protein resides in the cell membrane. The enzyme catalyses UDP-N-acetyl-alpha-D-muramoyl-L-alanyl-gamma-D-glutamyl-meso-2,6-diaminopimeloyl-D-alanyl-D-alanine + di-trans,octa-cis-undecaprenyl phosphate = di-trans,octa-cis-undecaprenyl diphospho-N-acetyl-alpha-D-muramoyl-L-alanyl-D-glutamyl-meso-2,6-diaminopimeloyl-D-alanyl-D-alanine + UMP. The protein operates within cell wall biogenesis; peptidoglycan biosynthesis. In terms of biological role, catalyzes the initial step of the lipid cycle reactions in the biosynthesis of the cell wall peptidoglycan: transfers peptidoglycan precursor phospho-MurNAc-pentapeptide from UDP-MurNAc-pentapeptide onto the lipid carrier undecaprenyl phosphate, yielding undecaprenyl-pyrophosphoryl-MurNAc-pentapeptide, known as lipid I. The polypeptide is Phospho-N-acetylmuramoyl-pentapeptide-transferase (Bifidobacterium adolescentis (strain ATCC 15703 / DSM 20083 / NCTC 11814 / E194a)).